Consider the following 615-residue polypeptide: Sodium-coupled neutral amino acid transporter 9 homolog (615 aa).

Topologically, residues 1–165 (MPPFFAEFTE…LKDVSGKQGS (165 aa)) are cytoplasmic. A disordered region spans residues 41 to 65 (VDDNDTDPLLDDEPPRRLPPAGGVP). Acidic residues predominate over residues 42 to 52 (DDNDTDPLLDD). The chain crosses the membrane as a helical span at residues 166–186 (IVTIFSIWNTMMGTSLLAMPW). Residues 175–180 (TMMGTS) form an important for arginine binding and amino acid transport region. Over 187 to 192 (ALQQAG) the chain is Lumenal. The chain crosses the membrane as a helical span at residues 193–213 (LVLGIIIMLSMAAICFYTAYI). At 214–246 (VIESPKRLQDLSVDPLLAEFSDVCKSLFGRIGE) the chain is on the cytoplasmic side. Residues 247 to 273 (YCAVVFSVCVLIGGVIVYWVLMSNFLY) form a helical membrane-spanning segment. Topologically, residues 274–341 (YTGAVVYESM…TGDDSWSFDK (68 aa)) are lumenal. Residues Asn-286 and Asn-295 are each glycosylated (N-linked (GlcNAc...) asparagine). A disulfide bridge connects residues Cys-304 and Cys-478. The helical transmembrane segment at 342 to 358 (FWTLRGTVPIYLAFALF) threads the bilayer. Topologically, residues 359-367 (PLMNFKSPT) are cytoplasmic. Residues 368–392 (FFTKFNVLGTISVMYLLMFVFSKLL) form a helical membrane-spanning segment. Residues 393–413 (ECGVNMDFSNPKSIHYVQLAN) lie on the Lumenal side of the membrane. A helical transmembrane segment spans residues 414-434 (MHFPALSGTLTLSYFIHNAVL). Over 435 to 451 (TILRNQKHPENNARDLS) the chain is Cytoplasmic. Residues 452–472 (IGYCLVAFCYVFIGFTFFAAF) traverse the membrane as a helical segment. Residues 473-491 (PVQRSCISDNFLNNFGAGD) lie on the Lumenal side of the membrane. Residues 492–512 (VLSSTARLFLLFQMITVLPLL) form a helical membrane-spanning segment. At 513–533 (MFLVRSQLFYAIFGQTWPGAI) the chain is on the cytoplasmic side. Residues 534–554 (RVIILNVLLIAVAVGFATFYP) form a helical membrane-spanning segment. At 555-561 (NVGSILR) the chain is on the lumenal side. The helical transmembrane segment at 562–582 (YVGSISGLVYVFALPAMVYIK) threads the bilayer. The Cytoplasmic segment spans residues 583-594 (QSEAAGTLTPMK). Residues 595 to 615 (KYAHYGIIVIGVANLIAQFVI) traverse the membrane as a helical segment.

It belongs to the amino acid/polyamine transporter 2 family. SLC38A9 subfamily.

It localises to the lysosome membrane. The protein resides in the late endosome membrane. Amino acid transport is sodium-dependent. Transport of leucine, tyrosine and phenylalanine is increased by arginine binding. Functionally, lysosomal amino acid transporter involved in the activation of mTORC1 in response to amino acid levels. Probably acts as an amino acid sensor of the Rag GTPases and Ragulator complexes, 2 complexes involved in amino acid sensing and activation of mTORC1, a signaling complex promoting cell growth in response to growth factors, energy levels, and amino acids. This chain is Sodium-coupled neutral amino acid transporter 9 homolog, found in Caenorhabditis elegans.